A 227-amino-acid polypeptide reads, in one-letter code: UPF0173 metal-dependent hydrolase BALH_4194 (227 aa).

It belongs to the UPF0173 family.

The chain is UPF0173 metal-dependent hydrolase BALH_4194 from Bacillus thuringiensis (strain Al Hakam).